Consider the following 212-residue polypeptide: Maleylacetoacetate isomerase (212 aa).

Residues 1-83 form the GST N-terminal domain; it reads MKLYTYYRST…YLEERYPQPA (83 aa). Residues 88–211 enclose the GST C-terminal domain; that stretch reads DPLRRARERG…HPANQPDTPA (124 aa).

It belongs to the GST superfamily. Zeta family.

It catalyses the reaction 4-maleylacetoacetate = 4-fumarylacetoacetate. Its pathway is amino-acid degradation; L-phenylalanine degradation; acetoacetate and fumarate from L-phenylalanine: step 5/6. In Pseudomonas aeruginosa (strain ATCC 15692 / DSM 22644 / CIP 104116 / JCM 14847 / LMG 12228 / 1C / PRS 101 / PAO1), this protein is Maleylacetoacetate isomerase (maiA).